A 519-amino-acid chain; its full sequence is Cytosol aminopeptidase (519 aa).

Ser-42 bears the Phosphoserine mark. N6-succinyllysine is present on Lys-45. Ser-54 bears the Phosphoserine mark. An N6-succinyllysine mark is found at Lys-61 and Lys-103. Residues Ser-180 and Ser-194 each carry the phosphoserine modification. Zn(2+) contacts are provided by Leu-202, Met-203, and Thr-205. Ser-238 is subject to Phosphoserine. 2 residues coordinate Zn(2+): Lys-282 and Asp-287. The substrate site is built by Lys-282, Asp-287, Ser-292, and Lys-294. Asp-287 is a binding site for Mg(2+). Residue Lys-294 is part of the active site. Residues Arg-303, Asp-305, Asp-364, and Glu-366 each coordinate Zn(2+). Residues Asp-305 and Asp-364 each contribute to the substrate site. 2 residues coordinate Mg(2+): Asp-364 and Glu-366. Residue Arg-368 is part of the active site. Position 455 is an N6-acetyllysine; alternate (Lys-455). Position 455 is an N6-succinyllysine; alternate (Lys-455). Lys-476 carries the post-translational modification N6-succinyllysine. Lys-489 is modified (N6-acetyllysine; alternate). Lys-489 carries the post-translational modification N6-succinyllysine; alternate.

This sequence belongs to the peptidase M17 family. Homohexamer. Zn(2+) serves as cofactor. Requires Mn(2+) as cofactor.

It is found in the cytoplasm. It catalyses the reaction Release of an N-terminal amino acid, Xaa-|-Yaa-, in which Xaa is preferably Leu, but may be other amino acids including Pro although not Arg or Lys, and Yaa may be Pro. Amino acid amides and methyl esters are also readily hydrolyzed, but rates on arylamides are exceedingly low.. The catalysed reaction is an S-substituted L-cysteinylglycine + H2O = an S-substituted L-cysteine + glycine. It carries out the reaction L-cysteinylglycine + H2O = L-cysteine + glycine. The enzyme catalyses S-benzyl-L-cysteinylglycine + H2O = S-benzyl-L-cysteine + glycine. It catalyses the reaction Release of N-terminal proline from a peptide.. Its activity is regulated as follows. Zofenoprilat inhibits Cys-Gly hydrolysis activity. Its function is as follows. Cytosolic metallopeptidase that catalyzes the removal of unsubstituted N-terminal hydrophobic amino acids from various peptides. The presence of Zn(2+) ions is essential for the peptidase activity, and the association with other cofactors can modulate the substrate spectificity of the enzyme. For instance, in the presence of Mn(2+), it displays a specific Cys-Gly hydrolyzing activity of Cys-Gly-S-conjugates. Involved in the metabolism of glutathione and in the degradation of glutathione S-conjugates, which may play a role in the control of the cell redox status. The protein is Cytosol aminopeptidase of Bos taurus (Bovine).